The sequence spans 333 residues: Phosphate acyltransferase (333 aa).

This sequence belongs to the PlsX family. In terms of assembly, homodimer. Probably interacts with PlsY.

The protein localises to the cytoplasm. It catalyses the reaction a fatty acyl-[ACP] + phosphate = an acyl phosphate + holo-[ACP]. It functions in the pathway lipid metabolism; phospholipid metabolism. Its function is as follows. Catalyzes the reversible formation of acyl-phosphate (acyl-PO(4)) from acyl-[acyl-carrier-protein] (acyl-ACP). This enzyme utilizes acyl-ACP as fatty acyl donor, but not acyl-CoA. This chain is Phosphate acyltransferase, found in Helicobacter hepaticus (strain ATCC 51449 / 3B1).